The following is a 331-amino-acid chain: MSWLTPALVTIILTVVKAIVVLLAVVICGALLSWVERRLLGLWQDRYGPNRVGPFGAFQLGADMIKMFFKEDWTPPFADKMIFTLAPVIAMGALLVAFAIVPITPTWGVADLNIGILFFFAMAGLTVYAVLFAGWSSNNKFALLGSLRASAQTISYEVFLALSLMGIVAQVGSFNMRDIVQYQIDNVWFIIPQFFGFCTFIIAGVAVTHRHPFDQPEAEQELADGYHIEYAGMKWGMFFVGEYIGIVLVSALLATLFFGGWHGPFLDTLPWLSFFYFAAKTGFFIMLFILIRASLPRPRYDQVMAFSWKVCLPLTLINLLVTGALVLAAAQ.

8 helical membrane passes run A7–I27, M81–V101, I114–G134, I154–F174, V187–V207, F238–F258, W271–I291, and V310–A330.

Belongs to the complex I subunit 1 family. NDH-1 is composed of 13 different subunits. Subunits NuoA, H, J, K, L, M, N constitute the membrane sector of the complex.

It is found in the cell inner membrane. The catalysed reaction is a quinone + NADH + 5 H(+)(in) = a quinol + NAD(+) + 4 H(+)(out). NDH-1 shuttles electrons from NADH, via FMN and iron-sulfur (Fe-S) centers, to quinones in the respiratory chain. The immediate electron acceptor for the enzyme in this species is believed to be ubiquinone. Couples the redox reaction to proton translocation (for every two electrons transferred, four hydrogen ions are translocated across the cytoplasmic membrane), and thus conserves the redox energy in a proton gradient. This subunit may bind ubiquinone. This chain is NADH-quinone oxidoreductase subunit H, found in Pseudomonas paraeruginosa (strain DSM 24068 / PA7) (Pseudomonas aeruginosa (strain PA7)).